A 162-amino-acid chain; its full sequence is MRIGLYPGTFDPVTNGHLDIIGRAVKLVDKLVIGVAVNIGKGPLFTLEERVATLERETAHLTKIAQIEVRPFDTLLMYFAREVGAQMIVRGLRAVADFEYEFQMTAMNQQLDREIETVFLMADPRHQAIASRLVKEIAALGGDVHKFVPPGVAEQLLAKLAK.

Thr-9 provides a ligand contact to substrate. ATP-binding positions include 9-10 (TF) and His-17. Lys-41, Leu-76, and Arg-90 together coordinate substrate. ATP is bound by residues 91–93 (GLR), Glu-101, and 126–132 (HQAIASR).

Belongs to the bacterial CoaD family. As to quaternary structure, homohexamer. Mg(2+) serves as cofactor.

It is found in the cytoplasm. The enzyme catalyses (R)-4'-phosphopantetheine + ATP + H(+) = 3'-dephospho-CoA + diphosphate. The protein operates within cofactor biosynthesis; coenzyme A biosynthesis; CoA from (R)-pantothenate: step 4/5. Its function is as follows. Reversibly transfers an adenylyl group from ATP to 4'-phosphopantetheine, yielding dephospho-CoA (dPCoA) and pyrophosphate. The chain is Phosphopantetheine adenylyltransferase from Caulobacter sp. (strain K31).